A 307-amino-acid polypeptide reads, in one-letter code: Ornithine carbamoyltransferase (307 aa).

Carbamoyl phosphate is bound by residues 53-56 (STRT), Gln80, Arg104, and 131-134 (HPCQ). Residues Asn162, Asp219, and 223–224 (SM) contribute to the L-ornithine site. Residues 259–260 (CL) and Arg287 contribute to the carbamoyl phosphate site.

Belongs to the aspartate/ornithine carbamoyltransferase superfamily. OTCase family.

Its subcellular location is the cytoplasm. It carries out the reaction carbamoyl phosphate + L-ornithine = L-citrulline + phosphate + H(+). The protein operates within amino-acid biosynthesis; L-arginine biosynthesis; L-arginine from L-ornithine and carbamoyl phosphate: step 1/3. Reversibly catalyzes the transfer of the carbamoyl group from carbamoyl phosphate (CP) to the N(epsilon) atom of ornithine (ORN) to produce L-citrulline. The polypeptide is Ornithine carbamoyltransferase (Psychrobacter arcticus (strain DSM 17307 / VKM B-2377 / 273-4)).